Here is a 652-residue protein sequence, read N- to C-terminus: MPPLLTQPEVLERRLKEIPPEPGCYLMRDGEDRILYVGKSKSLRSRVRSYFRSRHDLSPRIRLMTRQVCEIEFIVTDSEAEALALESNLIKNHQPHFNVLLKDDKKYPYLCITWSEAYPRIFITRRRRFRSPLDRFYGPYVDVGLLRRTLFLVKRVFPLRQRPRPLHPDRTCLNYSIGRCPGVCQEKITSEDYHRTLRKVAMVFQGRSDELQRLLDEQMNRYAERLDFESAARVRDQLQGLDQLTADQKMSLPDSSVSRDVLALACDDRLAAVQLFQMRAGKLVGRLGYTADASALAPGLILQRVIEEHYSQVDAVEVPPELLVQHALPQQQLLEDWLTEQRERKVQIHCPKQRQKADLIELVQRNAEFELLRAKQGQEQQALATEDLAQLLEMPTPPRRIEGYDISHIQGSDAVASQVVFIDGLPAKQHYRKYKIRSSSIQSGHSDDFMAMAEIMRRRFRRWARAKADGVDVGALRHKGGSALQTDGLNDWPDVVMIDGGKGQLSAVMEALRELDLHEDLNVCSLAKQREEVFLPGESQPLESEPDQLGVALLRRLRDEAHRFAVSFHRQQRGERMKRSRLSDIPGVGPKRVKDLLAHFHSIDAIQMASVDLLSKAPGVGTALARDIHGFFHPAEEAGQDECSEEPRAHTA.

The GIY-YIG domain maps to 20 to 99 (PEPGCYLMRD…IKNHQPHFNV (80 aa)). One can recognise a UVR domain in the interval 209–244 (DELQRLLDEQMNRYAERLDFESAARVRDQLQGLDQL).

It belongs to the UvrC family. Interacts with UvrB in an incision complex.

It is found in the cytoplasm. Its function is as follows. The UvrABC repair system catalyzes the recognition and processing of DNA lesions. UvrC both incises the 5' and 3' sides of the lesion. The N-terminal half is responsible for the 3' incision and the C-terminal half is responsible for the 5' incision. The sequence is that of UvrABC system protein C from Parasynechococcus marenigrum (strain WH8102).